A 361-amino-acid chain; its full sequence is Nicotinate-nucleotide--dimethylbenzimidazole phosphoribosyltransferase (361 aa).

The active-site Proton acceptor is Glu-320.

The protein belongs to the CobT family. As to quaternary structure, homodimer.

The enzyme catalyses 5,6-dimethylbenzimidazole + nicotinate beta-D-ribonucleotide = alpha-ribazole 5'-phosphate + nicotinate + H(+). Its pathway is nucleoside biosynthesis; alpha-ribazole biosynthesis; alpha-ribazole from 5,6-dimethylbenzimidazole: step 1/2. Its function is as follows. Catalyzes the synthesis of alpha-ribazole-5'-phosphate from nicotinate mononucleotide (NAMN) and 5,6-dimethylbenzimidazole (DMB). This is Nicotinate-nucleotide--dimethylbenzimidazole phosphoribosyltransferase from Shigella boydii serotype 18 (strain CDC 3083-94 / BS512).